The primary structure comprises 186 residues: Putative thiamine-phosphate synthase 2 (186 aa).

4-amino-2-methyl-5-(diphosphooxymethyl)pyrimidine is bound by residues 35-39 and Asn67; that span reads QLREK. Glu68 lines the Mg(2+) pocket. Residue Ser105 coordinates 4-amino-2-methyl-5-(diphosphooxymethyl)pyrimidine. 131–133 is a 2-[(2R,5Z)-2-carboxy-4-methylthiazol-5(2H)-ylidene]ethyl phosphate binding site; that stretch reads TSS. His134 contacts 4-amino-2-methyl-5-(diphosphooxymethyl)pyrimidine. 2-[(2R,5Z)-2-carboxy-4-methylthiazol-5(2H)-ylidene]ethyl phosphate is bound by residues Gly161 and 181–182; that span reads IS.

This sequence belongs to the thiamine-phosphate synthase family. Requires Mg(2+) as cofactor.

The enzyme catalyses 2-[(2R,5Z)-2-carboxy-4-methylthiazol-5(2H)-ylidene]ethyl phosphate + 4-amino-2-methyl-5-(diphosphooxymethyl)pyrimidine + 2 H(+) = thiamine phosphate + CO2 + diphosphate. It carries out the reaction 2-(2-carboxy-4-methylthiazol-5-yl)ethyl phosphate + 4-amino-2-methyl-5-(diphosphooxymethyl)pyrimidine + 2 H(+) = thiamine phosphate + CO2 + diphosphate. It catalyses the reaction 4-methyl-5-(2-phosphooxyethyl)-thiazole + 4-amino-2-methyl-5-(diphosphooxymethyl)pyrimidine + H(+) = thiamine phosphate + diphosphate. The protein operates within cofactor biosynthesis; thiamine diphosphate biosynthesis; thiamine phosphate from 4-amino-2-methyl-5-diphosphomethylpyrimidine and 4-methyl-5-(2-phosphoethyl)-thiazole: step 1/1. Its function is as follows. Condenses 4-methyl-5-(beta-hydroxyethyl)thiazole monophosphate (THZ-P) and 2-methyl-4-amino-5-hydroxymethyl pyrimidine pyrophosphate (HMP-PP) to form thiamine monophosphate (TMP). The protein is Putative thiamine-phosphate synthase 2 (thiE2) of Aquifex aeolicus (strain VF5).